We begin with the raw amino-acid sequence, 296 residues long: Homoserine kinase (296 aa).

84 to 94 (PLARGLGSSSS) contacts ATP.

Belongs to the GHMP kinase family. Homoserine kinase subfamily.

The protein resides in the cytoplasm. The catalysed reaction is L-homoserine + ATP = O-phospho-L-homoserine + ADP + H(+). Its pathway is amino-acid biosynthesis; L-threonine biosynthesis; L-threonine from L-aspartate: step 4/5. Functionally, catalyzes the ATP-dependent phosphorylation of L-homoserine to L-homoserine phosphate. The chain is Homoserine kinase from Lactococcus lactis subsp. lactis (strain IL1403) (Streptococcus lactis).